The sequence spans 366 residues: Probable dual-specificity RNA methyltransferase RlmN (366 aa).

E108 serves as the catalytic Proton acceptor. The Radical SAM core domain occupies 114-352 (YSDRSTLCIS…CTVRDTKGQE (239 aa)). Cysteines 121 and 357 form a disulfide. 3 residues coordinate [4Fe-4S] cluster: C128, C132, and C135. S-adenosyl-L-methionine contacts are provided by residues 178–179 (GE), S212, 235–237 (SLH), and N314. Catalysis depends on C357, which acts as the S-methylcysteine intermediate.

It belongs to the radical SAM superfamily. RlmN family. [4Fe-4S] cluster is required as a cofactor.

It localises to the cytoplasm. It carries out the reaction adenosine(2503) in 23S rRNA + 2 reduced [2Fe-2S]-[ferredoxin] + 2 S-adenosyl-L-methionine = 2-methyladenosine(2503) in 23S rRNA + 5'-deoxyadenosine + L-methionine + 2 oxidized [2Fe-2S]-[ferredoxin] + S-adenosyl-L-homocysteine. The catalysed reaction is adenosine(37) in tRNA + 2 reduced [2Fe-2S]-[ferredoxin] + 2 S-adenosyl-L-methionine = 2-methyladenosine(37) in tRNA + 5'-deoxyadenosine + L-methionine + 2 oxidized [2Fe-2S]-[ferredoxin] + S-adenosyl-L-homocysteine. Functionally, specifically methylates position 2 of adenine 2503 in 23S rRNA and position 2 of adenine 37 in tRNAs. In Corynebacterium glutamicum (strain ATCC 13032 / DSM 20300 / JCM 1318 / BCRC 11384 / CCUG 27702 / LMG 3730 / NBRC 12168 / NCIMB 10025 / NRRL B-2784 / 534), this protein is Probable dual-specificity RNA methyltransferase RlmN.